Here is a 128-residue protein sequence, read N- to C-terminus: MAWRVPGVRPASTFFPQVLRASSELPNRLPEGSTVGPKPDSSWEAGSQGNWGLTSSGAGQDSSAQKLGILSVQISLKIWTWEKPSGWGHLHAAVTGASCCSPLSQGGAICLVTAPQDKPDCSPCTSGH.

Residues 25 to 61 (LPNRLPEGSTVGPKPDSSWEAGSQGNWGLTSSGAGQD) are disordered. Residues 44-61 (EAGSQGNWGLTSSGAGQD) show a composition bias toward polar residues.

This is an uncharacterized protein from Homo sapiens (Human).